A 225-amino-acid chain; its full sequence is MKDLFLFSDLIYHNHLFVYAFHFCLVAIIVVLVAKLATSKMQLVPRGLQNIVEAYLEGVISMGRDTLGSEALARKYLPLVATIGFVVFFSNAIGIIPGFESPTSSLNLTLTLALIVFFYYHFEGIKKNGFFKYFGHFMGPSKALAPLMFPVEIISHLSRIVSLSFRLFGNIKGDDLFLLVMLTLAPWFAPLPAYALLTLMAVLQTFIFMMLTYVYLAGAVAIEEH.

5 helical membrane passes run 16-36 (LFVYAFHFCLVAIIVVLVAKL), 79-99 (LVATIGFVVFFSNAIGIIPGF), 105-125 (SLNLTLTLALIVFFYYHFEGI), 176-196 (LFLLVMLTLAPWFAPLPAYAL), and 202-222 (VLQTFIFMMLTYVYLAGAVAI).

This sequence belongs to the ATPase A chain family. In terms of assembly, F-type ATPases have 2 components, CF(1) - the catalytic core - and CF(0) - the membrane proton channel. CF(1) has five subunits: alpha(3), beta(3), gamma(1), delta(1), epsilon(1). CF(0) has three main subunits: a(1), b(2) and c(9-12). The alpha and beta chains form an alternating ring which encloses part of the gamma chain. CF(1) is attached to CF(0) by a central stalk formed by the gamma and epsilon chains, while a peripheral stalk is formed by the delta and b chains.

The protein localises to the cell inner membrane. Its function is as follows. Key component of the proton channel; it plays a direct role in the translocation of protons across the membrane. The chain is ATP synthase subunit a from Campylobacter curvus (strain 525.92).